Reading from the N-terminus, the 128-residue chain is Mu-like prophage FluMu protein gp35 (128 aa).

Residues 53–87 (TETGSQEGGEGLSKEPAGSDEQKQLRADPPSTDLN) form a disordered region.

This sequence to phage Mu protein gp35. Monomer.

The sequence is that of Mu-like prophage FluMu protein gp35 from Haemophilus influenzae (strain ATCC 51907 / DSM 11121 / KW20 / Rd).